Consider the following 80-residue polypeptide: Probable antimicrobial peptide clone Con10 (80 aa).

A signal peptide spans 1-24 (MQYKTKTFLVIFLAYLVVTNEAEA). The propeptide occupies 56–80 (EIEDFFDPYQRELDLELERLLSQLQ).

Belongs to the non-disulfide-bridged peptide (NDBP) superfamily. Medium-length antimicrobial peptide (group 3) family. Expressed by the venom gland.

It is found in the secreted. The protein resides in the target cell membrane. Its function is as follows. Antimicrobial peptide. Has antifungal activity against all strains tested (MIC=12.5-200 uM). May act by disrupting the integrity of the bacterial cell membrane. The chain is Probable antimicrobial peptide clone Con10 from Opisthacanthus cayaporum (South American scorpion).